Consider the following 445-residue polypeptide: Argininosuccinate synthase (445 aa).

ATP contacts are provided by residues 17 to 25 (AFSGGLDTS) and alanine 43. Tyrosine 99 lines the L-citrulline pocket. ATP-binding residues include glycine 129 and threonine 131. Threonine 131, asparagine 135, and aspartate 136 together coordinate L-aspartate. L-citrulline is bound at residue asparagine 135. Aspartate 136 lines the ATP pocket. 2 residues coordinate L-citrulline: arginine 139 and serine 192. An ATP-binding site is contributed by aspartate 194. L-citrulline is bound by residues threonine 201, glutamate 203, and glutamate 280.

This sequence belongs to the argininosuccinate synthase family. Type 2 subfamily. As to quaternary structure, homotetramer.

The protein localises to the cytoplasm. It carries out the reaction L-citrulline + L-aspartate + ATP = 2-(N(omega)-L-arginino)succinate + AMP + diphosphate + H(+). The protein operates within amino-acid biosynthesis; L-arginine biosynthesis; L-arginine from L-ornithine and carbamoyl phosphate: step 2/3. The sequence is that of Argininosuccinate synthase from Afipia carboxidovorans (strain ATCC 49405 / DSM 1227 / KCTC 32145 / OM5) (Oligotropha carboxidovorans).